The following is a 227-amino-acid chain: UPF0173 metal-dependent hydrolase DR_0006 (227 aa).

It belongs to the UPF0173 family.

This is UPF0173 metal-dependent hydrolase DR_0006 from Deinococcus radiodurans (strain ATCC 13939 / DSM 20539 / JCM 16871 / CCUG 27074 / LMG 4051 / NBRC 15346 / NCIMB 9279 / VKM B-1422 / R1).